The sequence spans 249 residues: Hydroxyacylglutathione hydrolase (249 aa).

Positions 54, 56, 58, 59, 113, 138, and 176 each coordinate Zn(2+).

This sequence belongs to the metallo-beta-lactamase superfamily. Glyoxalase II family. In terms of assembly, monomer. The cofactor is Zn(2+).

The catalysed reaction is an S-(2-hydroxyacyl)glutathione + H2O = a 2-hydroxy carboxylate + glutathione + H(+). It participates in secondary metabolite metabolism; methylglyoxal degradation; (R)-lactate from methylglyoxal: step 2/2. Functionally, thiolesterase that catalyzes the hydrolysis of S-D-lactoyl-glutathione to form glutathione and D-lactic acid. The polypeptide is Hydroxyacylglutathione hydrolase (Synechococcus sp. (strain CC9605)).